The sequence spans 481 residues: uncharacterized protein (481 aa).

The span at 1–18 (MSRLPSKTKYHSSHRSLN) shows a compositional bias: basic residues. The tract at residues 1–37 (MSRLPSKTKYHSSHRSLNRKTPLLQRSSETNSLRESG) is disordered. Residues 24 to 34 (LQRSSETNSLR) show a composition bias toward polar residues. A run of 2 helical transmembrane segments spans residues 172 to 191 (SISTLIGTGGGIGITGAGAI) and 195 to 214 (AAAGIGTAVTVGVLLFYLCW).

It localises to the membrane. This is an uncharacterized protein from Coxiella burnetii (strain RSA 493 / Nine Mile phase I).